The primary structure comprises 413 residues: Probable tRNA sulfurtransferase (413 aa).

The THUMP domain maps to 61–171 (TRVLDRVTRV…EDGTYIFTEK (111 aa)). ATP-binding positions include 189–190 (ML), 214–215 (HF), Arg-275, Gly-297, and Gln-306.

The protein belongs to the ThiI family.

It is found in the cytoplasm. The catalysed reaction is [ThiI sulfur-carrier protein]-S-sulfanyl-L-cysteine + a uridine in tRNA + 2 reduced [2Fe-2S]-[ferredoxin] + ATP + H(+) = [ThiI sulfur-carrier protein]-L-cysteine + a 4-thiouridine in tRNA + 2 oxidized [2Fe-2S]-[ferredoxin] + AMP + diphosphate. It catalyses the reaction [ThiS sulfur-carrier protein]-C-terminal Gly-Gly-AMP + S-sulfanyl-L-cysteinyl-[cysteine desulfurase] + AH2 = [ThiS sulfur-carrier protein]-C-terminal-Gly-aminoethanethioate + L-cysteinyl-[cysteine desulfurase] + A + AMP + 2 H(+). The protein operates within cofactor biosynthesis; thiamine diphosphate biosynthesis. Functionally, catalyzes the ATP-dependent transfer of a sulfur to tRNA to produce 4-thiouridine in position 8 of tRNAs, which functions as a near-UV photosensor. Also catalyzes the transfer of sulfur to the sulfur carrier protein ThiS, forming ThiS-thiocarboxylate. This is a step in the synthesis of thiazole, in the thiamine biosynthesis pathway. The sulfur is donated as persulfide by IscS. The sequence is that of Probable tRNA sulfurtransferase from Natranaerobius thermophilus (strain ATCC BAA-1301 / DSM 18059 / JW/NM-WN-LF).